Reading from the N-terminus, the 491-residue chain is Adenylosuccinate synthetase, chloroplastic (491 aa).

GTP-binding positions include 78–84 (GDEGKGK) and 106–108 (GHT). Aspartate 79 (proton acceptor) is an active-site residue. Mg(2+)-binding residues include aspartate 79 and glycine 106. IMP is bound by residues 79-82 (DEGK), 104-107 (NAGH), threonine 196, arginine 210, glutamine 290, threonine 305, and arginine 369. The Proton donor role is filled by histidine 107. 365-371 (TTTGRPR) contacts substrate. GTP contacts are provided by residues arginine 371, 397 to 399 (KLD), and 480 to 482 (GIG).

Belongs to the adenylosuccinate synthetase family. As to quaternary structure, homodimer. It depends on Mg(2+) as a cofactor.

The protein resides in the plastid. Its subcellular location is the chloroplast. It catalyses the reaction IMP + L-aspartate + GTP = N(6)-(1,2-dicarboxyethyl)-AMP + GDP + phosphate + 2 H(+). Its pathway is purine metabolism; AMP biosynthesis via de novo pathway; AMP from IMP: step 1/2. Plays an important role in the de novo pathway and in the salvage pathway of purine nucleotide biosynthesis. Catalyzes the first committed step in the biosynthesis of AMP from IMP. The polypeptide is Adenylosuccinate synthetase, chloroplastic (Populus trichocarpa (Western balsam poplar)).